Consider the following 253-residue polypeptide: Dihydroanticapsin 7-dehydrogenase (253 aa).

9–31 (LITGGASGIGYAAVQAFLNQQAN) serves as a coordination point for NAD(+). Ser-139 is a binding site for substrate. Tyr-152 serves as the catalytic Proton acceptor.

The protein belongs to the short-chain dehydrogenases/reductases (SDR) family.

It catalyses the reaction L-dihydroanticapsin + NAD(+) = L-anticapsin + NADH + H(+). It participates in antibiotic biosynthesis; bacilysin biosynthesis. In terms of biological role, part of the bacABCDEFG operon responsible for the biosynthesis of bacilysin, an irreversible inactivator of the glutaminase domain of glucosamine synthetase. Catalyzes the dehydrogenation of the C7-hydroxyl group in the 4S-tetrahydrotyrosine (4S-H4Tyr) to yield anticapsin (epoxycyclohexanonyl-Ala). This is Dihydroanticapsin 7-dehydrogenase from Bacillus subtilis.